The sequence spans 24 residues: Grammistin Gs G (24 aa).

Belongs to the grammistin family. Group 1 subfamily. Exists as aggregates of 3-4 molecules. Expressed by the skin glands.

It is found in the secreted. Functionally, thanks to its abundant amphiphilic alpha-helices, it may integrate into membrane phospholipids, leading to lysis of the membrane. Its high hemolytic activity is inhibited by phospholipids, but not by cholesterol. Has antibacterial activity with a broad spectrum against various species of bacteria including both Gram-positive and Gram-negative groups. Also has high ichthyotoxic activity. The protein is Grammistin Gs G of Grammistes sexlineatus (Goldenstriped soapfish).